The following is a 770-amino-acid chain: Low-density lipoprotein receptor-related protein 3 (770 aa).

An N-terminal signal peptide occupies residues 1 to 36 (MEKRAAAGLEGAPGARAQLAVVCLVNIFLTGRLSSA). Residues 37-496 (VPALAACSGK…HGCLAAVPRK (460 aa)) lie on the Extracellular side of the membrane. 9 disulfides stabilise this stretch: Cys43–Cys72, Cys99–Cys120, Cys166–Cys178, Cys173–Cys191, Cys185–Cys200, Cys212–Cys227, Cys219–Cys240, Cys234–Cys249, and Cys254–Cys282. Positions 43 to 159 (CSGKLEQHTE…QGFRLSYIRG (117 aa)) constitute a CUB 1 domain. N-linked (GlcNAc...) asparagine glycosylation is present at Asn71. LDL-receptor class A domains are found at residues 165–201 (SCQA…GNCS) and 211–250 (LCPG…AGCP). The N-linked (GlcNAc...) asparagine glycan is linked to Asn199. The CUB 2 domain occupies 254-365 (CGRRLGSFYG…HGFNATYQVK (112 aa)). A glycan (N-linked (GlcNAc...) asparagine) is linked at Asn359. 2 LDL-receptor class A domains span residues 415–453 (ACPP…KNCF) and 454–490 (SCQP…HGCL). Cystine bridges form between Cys416/Cys430, Cys423/Cys443, Cys437/Cys452, Cys455/Cys467, Cys462/Cys480, and Cys474/Cys489. A helical transmembrane segment spans residues 497 to 517 (VITAALIGSLVCGLLLVIALG). Topologically, residues 518–770 (CAFKLYSLRT…ASDDEALLVC (253 aa)) are cytoplasmic. The tract at residues 635–770 (LGDGFLQPAP…ASDDEALLVC (136 aa)) is disordered. Residues 689–707 (RDPECRPVDKDRKVCREPL) are compositionally biased toward basic and acidic residues. A compositionally biased stretch (polar residues) spans 729–738 (QVSTASSTLG). Acidic residues predominate over residues 761 to 770 (ASDDEALLVC).

Belongs to the LDLR family. In terms of assembly, binds GGA1 and GGA2. Widely expressed. Highly expressed in skeletal muscle and ovary. Expressed at intermediate level in heart, brain, liver, pancreas, prostate and small intestine. Weakly expressed in testis, colon and leukocyte.

Its subcellular location is the membrane. It localises to the coated pit. In terms of biological role, probable receptor, which may be involved in the internalization of lipophilic molecules and/or signal transduction. Its precise role is however unclear, since it does not bind to very low density lipoprotein (VLDL) or to LRPAP1 in vitro. The chain is Low-density lipoprotein receptor-related protein 3 (LRP3) from Homo sapiens (Human).